A 341-amino-acid polypeptide reads, in one-letter code: MIELCGLKKSFSGKLALNDINLFIQEGEIFGVIGKSGAGKSTLLRCINILEKPDEGEVIIDGQNLMSLSRKNLALARHKIAMIFQHFNLLNSKTVFDNIALPMRIQGIDEELIKQKIEELLPVVELTDKKDAFPSQLSGGQKQRVAIARALSCSPKVLLCDEATSALDPATTDAILSLLKKINELYGITIVLITHEMDVVKRICQRLSVMVDGKIVETTALSNIFNKPESLARKMLYAQISPELPTCLTRRLADYATEKPLVRLFFQGEEATVPFISQTSRELNMDINILLANIDRFDGVTCGVLVVELTANPLLLEAFINRCEQAGITVEVLGYVLPDGL.

Residues 2-237 (IELCGLKKSF…PESLARKMLY (236 aa)) enclose the ABC transporter domain. 34 to 41 (GKSGAGKS) serves as a coordination point for ATP.

It belongs to the ABC transporter superfamily. Methionine importer (TC 3.A.1.24) family. As to quaternary structure, the complex is composed of two ATP-binding proteins (MetN), two transmembrane proteins (MetI) and a solute-binding protein (MetQ).

The protein localises to the cell inner membrane. The enzyme catalyses L-methionine(out) + ATP + H2O = L-methionine(in) + ADP + phosphate + H(+). It carries out the reaction D-methionine(out) + ATP + H2O = D-methionine(in) + ADP + phosphate + H(+). In terms of biological role, part of the ABC transporter complex MetNIQ involved in methionine import. Responsible for energy coupling to the transport system. This Legionella pneumophila (strain Paris) protein is Methionine import ATP-binding protein MetN.